We begin with the raw amino-acid sequence, 299 residues long: Acetaldehyde dehydrogenase 1 (299 aa).

The active-site Acyl-thioester intermediate is the cysteine 130. NAD(+) contacts are provided by residues 161-169 and asparagine 272; that span reads SVGPGTRKN.

Belongs to the acetaldehyde dehydrogenase family.

It catalyses the reaction acetaldehyde + NAD(+) + CoA = acetyl-CoA + NADH + H(+). This Burkholderia cenocepacia (strain ATCC BAA-245 / DSM 16553 / LMG 16656 / NCTC 13227 / J2315 / CF5610) (Burkholderia cepacia (strain J2315)) protein is Acetaldehyde dehydrogenase 1 (mhpF).